The primary structure comprises 429 residues: Transcriptional adapter 3 (429 aa).

Positions 41-70 form a coiled coil; sequence IEELDTLQLELETLLSSASRRLRALEEQRQ. Disordered regions lie at residues 86–132, 208–257, and 274–308; these read KLEK…TKVQ, EERR…PFGP, and PMEDSPIPDIPGKDDGAGTSPRSQGKAFSVPHTRS. Basic and acidic residues-rich tracts occupy residues 208-221 and 230-249; these read EERREGARANDKKK and LDAKDVDALLKKSESQHEPP. The stretch at 364–404 forms a coiled coil; it reads LLKLAREEMRKQELRQRVRVADNEVMEAFRRIMAARQKKRT.

It belongs to the NGG1 family.

It localises to the nucleus. Functionally, functions as a component of the PCAF complex. The PCAF complex is capable of efficiently acetylating histones in a nucleosomal context. The polypeptide is Transcriptional adapter 3 (tada3) (Danio rerio (Zebrafish)).